Here is a 175-residue protein sequence, read N- to C-terminus: Ribosome maturation factor RimM (175 aa).

Residues 98–175 enclose the PRC barrel domain; it reads EGEYYWHQLE…EMRVDWDADF (78 aa).

It belongs to the RimM family. As to quaternary structure, binds ribosomal protein uS19.

The protein localises to the cytoplasm. An accessory protein needed during the final step in the assembly of 30S ribosomal subunit, possibly for assembly of the head region. Essential for efficient processing of 16S rRNA. May be needed both before and after RbfA during the maturation of 16S rRNA. It has affinity for free ribosomal 30S subunits but not for 70S ribosomes. This Pseudomonas aeruginosa (strain UCBPP-PA14) protein is Ribosome maturation factor RimM.